Here is a 120-residue protein sequence, read N- to C-terminus: Chaperonin GroEL (120 aa).

23 to 27 (DGTTT) contributes to the ATP binding site.

It belongs to the chaperonin (HSP60) family. Forms a cylinder of 14 subunits composed of two heptameric rings stacked back-to-back. Interacts with the co-chaperonin GroES.

The protein localises to the cytoplasm. It carries out the reaction ATP + H2O + a folded polypeptide = ADP + phosphate + an unfolded polypeptide.. Its function is as follows. Together with its co-chaperonin GroES, plays an essential role in assisting protein folding. The GroEL-GroES system forms a nano-cage that allows encapsulation of the non-native substrate proteins and provides a physical environment optimized to promote and accelerate protein folding. This is Chaperonin GroEL from Mycobacterium intracellulare.